A 138-amino-acid polypeptide reads, in one-letter code: Regulator of ribonuclease activity B (138 aa).

A disordered region spans residues 114–138 (YFEDPNGEDGDDEDFVDEDDDGVRH). Over residues 118–138 (PNGEDGDDEDFVDEDDDGVRH) the composition is skewed to acidic residues.

The protein belongs to the RraB family. Interacts with the C-terminal region of Rne.

It localises to the cytoplasm. Its function is as follows. Globally modulates RNA abundance by binding to RNase E (Rne) and regulating its endonucleolytic activity. Can modulate Rne action in a substrate-dependent manner by altering the composition of the degradosome. The polypeptide is Regulator of ribonuclease activity B (Escherichia coli (strain K12)).